Reading from the N-terminus, the 412-residue chain is Eukaryotic initiation factor 4A-2 (412 aa).

Residue A2 is modified to N-acetylalanine. Residues 39–67 (ESFDAMGLQENLLRGIYAYGFEKPSAIQQ) carry the Q motif motif. One can recognise a Helicase ATP-binding domain in the interval 70–240 (IVPFCKGLDV…RKFMSKPVRI (171 aa)). Residue 83-90 (AQSGTGKT) coordinates ATP. T145 is modified (phosphothreonine). A DEAD box motif is present at residues 188 to 191 (DEAD). One can recognise a Helicase C-terminal domain in the interval 251-412 (GIKQFYVNVE…ELPSNVADLL (162 aa)).

Belongs to the DEAD box helicase family. eIF4A subfamily. As to quaternary structure, eIF4F is a multi-subunit complex, the composition of which varies with external and internal environmental conditions. It is composed of at least EIF4A, EIF4E and EIF4G. As to expression, ubiquitous. Preferentially expressed in flowers, young leaves and roots.

It is found in the cytoplasm. The enzyme catalyses ATP + H2O = ADP + phosphate + H(+). In terms of biological role, ATP-dependent RNA helicase which is a subunit of the eIF4F complex involved in cap recognition and is required for mRNA binding to ribosome. In the current model of translation initiation, eIF4A unwinds RNA secondary structures in the 5'-UTR of mRNAs which is necessary to allow efficient binding of the small ribosomal subunit, and subsequent scanning for the initiator codon. The sequence is that of Eukaryotic initiation factor 4A-2 (TIF4A-2) from Arabidopsis thaliana (Mouse-ear cress).